Here is a 418-residue protein sequence, read N- to C-terminus: Actin-like protein 7B (418 aa).

A disordered region spans residues 1–42; it reads MATKNSPSPKPMGTAQGDPGEAGTLPAPEAAGIRDTGSTQLK. Ser8 is modified (phosphoserine).

The protein belongs to the actin family. As to expression, testis specific.

It is found in the cytoplasm. The protein resides in the cytoskeleton. In Mus musculus (Mouse), this protein is Actin-like protein 7B (Actl7b).